The chain runs to 303 residues: Lipase chaperone (303 aa).

The helical transmembrane segment at 7-23 threads the bilayer; it reads TLAAACAAWLAWWAWPD.

This sequence belongs to the lipase chaperone family.

It is found in the cell inner membrane. May be involved in the folding of the extracellular lipase during its passage through the periplasm. The sequence is that of Lipase chaperone (lifO) from Chromobacterium violaceum (strain ATCC 12472 / DSM 30191 / JCM 1249 / CCUG 213 / NBRC 12614 / NCIMB 9131 / NCTC 9757 / MK).